We begin with the raw amino-acid sequence, 341 residues long: MNNPIPSNLKSEAKKAAKILREFTEITSRNGPDKIIPAHVIAKAKGLAILSVIKAGFLVTARGGSGIVLARLPDGKWSAPSAIGIAGLGGGFELGIEVSDLVIILNYDRAVEAFAKGGNLTLGGNLTVAVGPLGRNLEGNVSLRSSAAVFTYCKSRGLFAGISLEGSCLIERKETNRKFYCQDIRAYDILFGDITRPAQAEDLYEVLDSFTEKYEIEGQRVNARRAAREQKKASAKLPPKPSSRPEQSSAQVQLSSGSQSSRNEYNLYPELSSYRERVGNSNQPIEVTALYSFEGQQPGDLNFQAGDRITVISKTDSHFDWWEGKLRGRTGIFPANYVTMN.

The segment at 221–265 (VNARRAAREQKKASAKLPPKPSSRPEQSSAQVQLSSGSQSSRNEY) is disordered. Residues 246-264 (EQSSAQVQLSSGSQSSRNE) show a composition bias toward polar residues. The SH3 domain occupies 282–341 (NQPIEVTALYSFEGQQPGDLNFQAGDRITVISKTDSHFDWWEGKLRGRTGIFPANYVTMN).

This sequence belongs to the SH3YL1 family. In terms of assembly, interacts with SH3D19.

The chain is SH3 domain-containing YSC84-like protein 1 (SH3YL1) from Bos taurus (Bovine).